The chain runs to 231 residues: Small ribosomal subunit protein uS3 (231 aa).

A KH type-2 domain is found at 17–86; the sequence is VEKYLTKELK…SPQIEVQQVQ (70 aa).

It belongs to the universal ribosomal protein uS3 family. In terms of assembly, part of the 30S ribosomal subunit.

Functionally, binds the lower part of the 30S subunit head. This Methanoregula boonei (strain DSM 21154 / JCM 14090 / 6A8) protein is Small ribosomal subunit protein uS3.